The following is a 393-amino-acid chain: Peptidyl-prolyl cis-trans isomerase CYP7 (393 aa).

The region spanning 8–196 is the PPIase cyclophilin-type domain; it reads YLDISIDKKP…SDVRISDCGV (189 aa). TPR repeat units follow at residues 240-273, 292-325, and 330-363; these read ANII…INEY, MKIY…DNVP, and AKAY…NPDD.

As to quaternary structure, interacts with RPD3 and CNS1.

The catalysed reaction is [protein]-peptidylproline (omega=180) = [protein]-peptidylproline (omega=0). Functionally, PPIases accelerate the folding of proteins. It catalyzes the cis-trans isomerization of proline imidic peptide bonds in oligopeptides. Plays a major role in negative regulation of the heat shock transcription factor (HSF). This chain is Peptidyl-prolyl cis-trans isomerase CYP7 (CPR7), found in Saccharomyces cerevisiae (strain ATCC 204508 / S288c) (Baker's yeast).